The chain runs to 190 residues: MDKRILAETFRLIKQKGFSFTMNDLAAALGTSKRTLYAYYSSKDQLVEAVVEQFIAEMKQIERDIYENESLNVLEKVKQMLISLPQGMELLNMGLLNELKKYHYDAWLTLDAFIKEEWAIVLALLNECKQQKRIRNINPDLFVHMYIGSINQVYDPEYPLKHQFTTGEVLESIVDVLFNGITADEEADAT.

One can recognise an HTH tetR-type domain in the interval 1 to 58 (MDKRILAETFRLIKQKGFSFTMNDLAAALGTSKRTLYAYYSSKDQLVEAVVEQFIAEM). A DNA-binding region (H-T-H motif) is located at residues 21-40 (TMNDLAAALGTSKRTLYAYY).

This is an uncharacterized protein from Bacillus subtilis (strain 168).